A 216-amino-acid polypeptide reads, in one-letter code: GTP cyclohydrolase-2 (216 aa).

51 to 55 (RIHSE) contributes to the GTP binding site. Cys-56, Cys-67, and Cys-69 together coordinate Zn(2+). GTP contacts are provided by residues Gln-72, 94–96 (EGR), and Thr-116. The active-site Proton acceptor is the Asp-128. Arg-130 serves as the catalytic Nucleophile. GTP-binding residues include Thr-151 and Lys-156.

This sequence belongs to the GTP cyclohydrolase II family. It depends on Zn(2+) as a cofactor.

It carries out the reaction GTP + 4 H2O = 2,5-diamino-6-hydroxy-4-(5-phosphoribosylamino)-pyrimidine + formate + 2 phosphate + 3 H(+). The protein operates within cofactor biosynthesis; riboflavin biosynthesis; 5-amino-6-(D-ribitylamino)uracil from GTP: step 1/4. Functionally, catalyzes the conversion of GTP to 2,5-diamino-6-ribosylamino-4(3H)-pyrimidinone 5'-phosphate (DARP), formate and pyrophosphate. This is GTP cyclohydrolase-2 from Haemophilus influenzae (strain 86-028NP).